Reading from the N-terminus, the 267-residue chain is Putative ABC transporter permease protein MJ0413 (267 aa).

7 consecutive transmembrane segments (helical) span residues 18-38 (VLKI…AIYI), 48-68 (EAVI…GSLI), 78-98 (VISG…LMGY), 115-135 (PIPP…GEMS), 136-156 (MIFI…ISGV), 188-208 (PSIL…VVAA), and 228-248 (LSRM…GLVL). The ABC transmembrane type-1 domain occupies 71–252 (TIISIKRVIS…LIGLVLDRGL (182 aa)).

This sequence belongs to the binding-protein-dependent transport system permease family. CysTW subfamily.

It is found in the cell membrane. Functionally, probably part of a binding-protein-dependent transport system. Probably responsible for the translocation of the substrate across the membrane. The sequence is that of Putative ABC transporter permease protein MJ0413 from Methanocaldococcus jannaschii (strain ATCC 43067 / DSM 2661 / JAL-1 / JCM 10045 / NBRC 100440) (Methanococcus jannaschii).